A 250-amino-acid chain; its full sequence is Vitamin B12 import ATP-binding protein BtuD (250 aa).

One can recognise an ABC transporter domain in the interval 3 to 233 (LRQASVLPRL…EVLSPVFGVA (231 aa)). Residue 29–36 (GPNGAGKS) participates in ATP binding.

Belongs to the ABC transporter superfamily. Vitamin B12 importer (TC 3.A.1.13.1) family. The complex is composed of two ATP-binding proteins (BtuD), two transmembrane proteins (BtuC) and a solute-binding protein (BtuF).

Its subcellular location is the cell inner membrane. It carries out the reaction an R-cob(III)alamin(out) + ATP + H2O = an R-cob(III)alamin(in) + ADP + phosphate + H(+). Its function is as follows. Part of the ABC transporter complex BtuCDF involved in vitamin B12 import. Responsible for energy coupling to the transport system. In Pectobacterium atrosepticum (strain SCRI 1043 / ATCC BAA-672) (Erwinia carotovora subsp. atroseptica), this protein is Vitamin B12 import ATP-binding protein BtuD.